We begin with the raw amino-acid sequence, 513 residues long: ATP synthase subunit alpha (513 aa).

169–176 lines the ATP pocket; that stretch reads GDRQTGKT.

The protein belongs to the ATPase alpha/beta chains family. In terms of assembly, F-type ATPases have 2 components, CF(1) - the catalytic core - and CF(0) - the membrane proton channel. CF(1) has five subunits: alpha(3), beta(3), gamma(1), delta(1), epsilon(1). CF(0) has three main subunits: a(1), b(2) and c(9-12). The alpha and beta chains form an alternating ring which encloses part of the gamma chain. CF(1) is attached to CF(0) by a central stalk formed by the gamma and epsilon chains, while a peripheral stalk is formed by the delta and b chains.

It is found in the cell inner membrane. It catalyses the reaction ATP + H2O + 4 H(+)(in) = ADP + phosphate + 5 H(+)(out). Functionally, produces ATP from ADP in the presence of a proton gradient across the membrane. The alpha chain is a regulatory subunit. The polypeptide is ATP synthase subunit alpha (Shewanella baltica (strain OS223)).